A 270-amino-acid polypeptide reads, in one-letter code: S-methyl-5'-thioadenosine phosphorylase (270 aa).

Phosphate-binding positions include S16, 58–59 (RH), and 91–92 (SA). Intrachain disulfides connect C138–C205, C200–C262, and C259–C261. Residue M190 participates in substrate binding. T191 serves as a coordination point for phosphate. 214–216 (DYD) contacts substrate.

Belongs to the PNP/MTAP phosphorylase family. MTAP subfamily. Homohexamer. Dimer of a homotrimer.

It carries out the reaction S-methyl-5'-thioadenosine + phosphate = 5-(methylsulfanyl)-alpha-D-ribose 1-phosphate + adenine. It functions in the pathway amino-acid biosynthesis; L-methionine biosynthesis via salvage pathway; S-methyl-5-thio-alpha-D-ribose 1-phosphate from S-methyl-5'-thioadenosine (phosphorylase route): step 1/1. Catalyzes the reversible phosphorylation of S-methyl-5'-thioadenosine (MTA) to adenine and 5-methylthioribose-1-phosphate. Involved in the breakdown of MTA, a major by-product of polyamine biosynthesis. Responsible for the first step in the methionine salvage pathway after MTA has been generated from S-adenosylmethionine. Has broad substrate specificity with 6-aminopurine nucleosides as preferred substrates. The chain is S-methyl-5'-thioadenosine phosphorylase from Saccharolobus solfataricus (strain ATCC 35092 / DSM 1617 / JCM 11322 / P2) (Sulfolobus solfataricus).